Here is a 744-residue protein sequence, read N- to C-terminus: 4'-phospho-dehydrooxetanocin synthase (744 aa).

The B12-binding domain occupies 119-259; the sequence is TVTLVNLCVI…KMLKKELKLD (141 aa). Positions 135, 139, 184, 241, 242, and 308 each coordinate cob(II)alamin. One can recognise a Radical SAM core domain in the interval 299–545; it reads SKFRGALTLE…IVSYMLASME (247 aa). 3 residues coordinate [4Fe-4S] cluster: Cys313, Cys318, and Cys321. Residues Pro322, His325, Lys326, Ala361, and Glu363 each contribute to the cob(II)alamin site. Residues Glu436 and Glu545 each contribute to the S-adenosyl-L-methionine site.

It belongs to the radical SAM superfamily. The cofactor is [4Fe-4S] cluster. Requires cob(II)alamin as cofactor.

It carries out the reaction dAMP + S-adenosyl-L-methionine = 4'-phospho-dehydrooxetanocin + 5'-deoxyadenosine + L-methionine + H(+). It catalyses the reaction AH2 + 2 S-adenosyl-L-methionine = 2 5'-deoxyadenosin-5'-yl radical + 2 L-methionine + A + 2 H(+). The enzyme catalyses 2 5'-deoxyadenosin-5'-yl radical + 2 dAMP + A = 2 4'-phospho-dehydrooxetanocin + 2 5'-deoxyadenosine + AH2. Its activity is regulated as follows. Requires OxsA for the oxidative ring contraction activity. Activation of OxsB requires its direct interaction with OxsA and is independent of OxsA phosphohydrolase activity. In contrast to ring contraction, methylation does not require the presence of OxsA. Functionally, isomerase involved in the biosynthesis of oxetanocin A (OXT-A), a nucleoside analog with antitumor, antiviral and antibacterial properties. Catalyzes an oxidative ring contraction of dAMP, forming an oxetane aldehyde. In addition, shows methyltransferase activity in vitro and is able to catalyze the radical mediated, stereoselective C2'-methylation of dAMP to form methylated 2'-dAMP. Also catalyzes the demethylation of S-adenosyl-L-methionine (SAM) to S-adenosyl-L-homocysteine (SAH). This Priestia megaterium (Bacillus megaterium) protein is 4'-phospho-dehydrooxetanocin synthase.